Reading from the N-terminus, the 197-residue chain is Imidazoleglycerol-phosphate dehydratase (197 aa).

This sequence belongs to the imidazoleglycerol-phosphate dehydratase family.

The protein resides in the cytoplasm. The catalysed reaction is D-erythro-1-(imidazol-4-yl)glycerol 3-phosphate = 3-(imidazol-4-yl)-2-oxopropyl phosphate + H2O. Its pathway is amino-acid biosynthesis; L-histidine biosynthesis; L-histidine from 5-phospho-alpha-D-ribose 1-diphosphate: step 6/9. This chain is Imidazoleglycerol-phosphate dehydratase, found in Pseudomonas fluorescens (strain ATCC BAA-477 / NRRL B-23932 / Pf-5).